Reading from the N-terminus, the 188-residue chain is Cytidylate kinase (188 aa).

An ATP-binding site is contributed by 7-15 (GKIGSGKST).

This sequence belongs to the cytidylate kinase family. Type 2 subfamily.

It is found in the cytoplasm. The enzyme catalyses CMP + ATP = CDP + ADP. It carries out the reaction dCMP + ATP = dCDP + ADP. The sequence is that of Cytidylate kinase (cmk) from Thermoplasma acidophilum (strain ATCC 25905 / DSM 1728 / JCM 9062 / NBRC 15155 / AMRC-C165).